A 357-amino-acid chain; its full sequence is Histidine biosynthesis bifunctional protein HisB (357 aa).

The segment at 1–168 is histidinol-phosphatase; that stretch reads MTPILFIDRD…GIAHALADAP (168 aa). Residue Asp8 is the Nucleophile of the active site. Mg(2+) is bound by residues Asp8, Asp10, and Asp128. Asp10 functions as the Proton donor in the catalytic mechanism. Positions 169 to 357 are imidazoleglycerol-phosphate dehydratase; the sequence is RIAVVQRDTK…TALPTTKGAL (189 aa).

It in the N-terminal section; belongs to the histidinol-phosphatase family. In the C-terminal section; belongs to the imidazoleglycerol-phosphate dehydratase family. Requires Mg(2+) as cofactor.

Its subcellular location is the cytoplasm. It carries out the reaction D-erythro-1-(imidazol-4-yl)glycerol 3-phosphate = 3-(imidazol-4-yl)-2-oxopropyl phosphate + H2O. The enzyme catalyses L-histidinol phosphate + H2O = L-histidinol + phosphate. It participates in amino-acid biosynthesis; L-histidine biosynthesis; L-histidine from 5-phospho-alpha-D-ribose 1-diphosphate: step 6/9. Its pathway is amino-acid biosynthesis; L-histidine biosynthesis; L-histidine from 5-phospho-alpha-D-ribose 1-diphosphate: step 8/9. In Stenotrophomonas maltophilia (strain R551-3), this protein is Histidine biosynthesis bifunctional protein HisB.